The following is a 446-amino-acid chain: Probable D-serine dehydratase (446 aa).

At lysine 116 the chain carries N6-(pyridoxal phosphate)lysine.

It belongs to the serine/threonine dehydratase family. DsdA subfamily. It depends on pyridoxal 5'-phosphate as a cofactor.

It carries out the reaction D-serine = pyruvate + NH4(+). This is Probable D-serine dehydratase from Bacillus cereus (strain 03BB102).